Here is an 803-residue protein sequence, read N- to C-terminus: Mastermind-like domain-containing protein 1 (803 aa).

Disordered regions lie at residues 22–50 (NRQE…TGMA), 292–374 (LAAS…APSS), 420–452 (GHLI…QQSF), and 486–641 (QQQQ…PDQS). Positions 296–309 (KQGSATKQGSNRNW) are enriched in polar residues. Residues 312 to 340 (LPPPGLSPPYLPVPSPHPPPPQPPPPPFS) show a composition bias toward pro residues. Over residues 347-362 (SCMSSSSLSGSAVQSS) the composition is skewed to low complexity. Composition is skewed to polar residues over residues 363 to 374 (PNALLSSMAPSS), 441 to 452 (NLSSPGLPQQSF), 495 to 526 (HQAN…SSSP), and 547 to 564 (PSPQ…QSSL). The segment covering 571-588 (ATPAHAPSATASSTATAT) has biased composition (low complexity). Residues 592–622 (QHHHQQHHHQQHHHQQQHHQQQHHQQHHHQQ) are compositionally biased toward basic residues. Over residues 623 to 641 (QQHQQQQHQQQQQQQPDQS) the composition is skewed to low complexity.

Belongs to the mastermind family.

The protein resides in the nucleus. Its function is as follows. Transactivates the HES3 promoter independently of NOTCH proteins. HES3 is a non-canonical NOTCH target gene which lacks binding sites for RBPJ. Required for testosterone production. The sequence is that of Mastermind-like domain-containing protein 1 (Mamld1) from Mus musculus (Mouse).